The following is a 712-amino-acid chain: DNA ligase (712 aa).

Residues 1–22 (MVQKNEHQGGQSQHSLFAAGPT) form a disordered region. Residues 53–57 (DDQFD) and aspartate 138 each bind NAD(+). The active-site N6-AMP-lysine intermediate is lysine 140. Arginine 161, glutamate 199, lysine 318, and lysine 342 together coordinate NAD(+). 4 residues coordinate Zn(2+): cysteine 436, cysteine 439, cysteine 454, and cysteine 459. Positions 612-631 (RGGRSGGGSSGSTGEGGLAS) are disordered. A compositionally biased stretch (gly residues) spans 614 to 630 (GRSGGGSSGSTGEGGLA). The BRCT domain maps to 629 to 712 (LASGPLAGKN…MLREAKAASE (84 aa)).

It belongs to the NAD-dependent DNA ligase family. LigA subfamily. Mg(2+) is required as a cofactor. Requires Mn(2+) as cofactor.

The enzyme catalyses NAD(+) + (deoxyribonucleotide)n-3'-hydroxyl + 5'-phospho-(deoxyribonucleotide)m = (deoxyribonucleotide)n+m + AMP + beta-nicotinamide D-nucleotide.. In terms of biological role, DNA ligase that catalyzes the formation of phosphodiester linkages between 5'-phosphoryl and 3'-hydroxyl groups in double-stranded DNA using NAD as a coenzyme and as the energy source for the reaction. It is essential for DNA replication and repair of damaged DNA. This Desulfovibrio desulfuricans (strain ATCC 27774 / DSM 6949 / MB) protein is DNA ligase.